A 498-amino-acid chain; its full sequence is ATP synthase subunit beta, chloroplastic (498 aa).

172–179 (GGAGVGKT) is an ATP binding site.

The protein belongs to the ATPase alpha/beta chains family. F-type ATPases have 2 components, CF(1) - the catalytic core - and CF(0) - the membrane proton channel. CF(1) has five subunits: alpha(3), beta(3), gamma(1), delta(1), epsilon(1). CF(0) has four main subunits: a(1), b(1), b'(1) and c(9-12).

Its subcellular location is the plastid. The protein resides in the chloroplast thylakoid membrane. The enzyme catalyses ATP + H2O + 4 H(+)(in) = ADP + phosphate + 5 H(+)(out). Produces ATP from ADP in the presence of a proton gradient across the membrane. The catalytic sites are hosted primarily by the beta subunits. The sequence is that of ATP synthase subunit beta, chloroplastic from Lolium perenne (Perennial ryegrass).